The chain runs to 199 residues: Probable NADH dehydrogenase [ubiquinone] iron-sulfur protein 7, mitochondrial (199 aa).

C74, C75, C139, and C169 together coordinate [4Fe-4S] cluster.

It belongs to the complex I 20 kDa subunit family. In terms of assembly, complex I is composed of 45 different subunits This is a component of the iron-sulfur (IP) fragment of the enzyme. [4Fe-4S] cluster serves as cofactor.

It localises to the mitochondrion. The enzyme catalyses a ubiquinone + NADH + 5 H(+)(in) = a ubiquinol + NAD(+) + 4 H(+)(out). Core subunit of the mitochondrial membrane respiratory chain NADH dehydrogenase (Complex I) that is believed to belong to the minimal assembly required for catalysis. Complex I functions in the transfer of electrons from NADH to the respiratory chain. The immediate electron acceptor for the enzyme is believed to be ubiquinone. The chain is Probable NADH dehydrogenase [ubiquinone] iron-sulfur protein 7, mitochondrial (nduf-7) from Caenorhabditis elegans.